The primary structure comprises 225 residues: Fibroblast growth factor 11 (225 aa).

The interval 1–28 (MAALASSLIRQKREVREPGGSRPVSAQR) is disordered.

Belongs to the heparin-binding growth factors family. Brain and eye, and in a segmental pattern of the embryonic body wall. In adult olfactory bulb, hippocampus and most concentrated in Purkinje cell layer of the cerebellum.

The protein localises to the nucleus. Its function is as follows. Probably involved in nervous system development and function. The sequence is that of Fibroblast growth factor 11 (Fgf11) from Mus musculus (Mouse).